Reading from the N-terminus, the 402-residue chain is Multidrug resistance protein MdtH (402 aa).

Residues 1 to 12 lie on the Cytoplasmic side of the membrane; sequence MSRVSQARNLGK. Residues 13-33 traverse the membrane as a helical segment; that stretch reads YFLLIDNMLVVLGFFVVFPLI. Residues 34 to 98 are Periplasmic-facing; the sequence is SIRFVDQMGW…GFATMGIAHE (65 aa). Residues 99-116 traverse the membrane as a helical segment; it reads PWLLWFSCFLSGLGGTLF. Residues 117 to 138 lie on the Cytoplasmic side of the membrane; it reads DPPRSALVVKLIRPEQRGRFFS. Residues 139 to 159 traverse the membrane as a helical segment; it reads LLMMQDSAGAVIGALLGSWLL. The Periplasmic portion of the chain corresponds to 160-164; the sequence is QYDFR. Residues 165 to 185 form a helical membrane-spanning segment; that stretch reads LVCATGAILFILCALFNAWLL. Over 186-213 the chain is Cytoplasmic; sequence PAWKLSTVRTPVREGMRRVMSDKRFVTY. Residues 214 to 234 form a helical membrane-spanning segment; the sequence is VLTLAGYYMLAVQVMLMLPIM. At 235-243 the chain is on the periplasmic side; the sequence is VNDIAGSPA. A helical transmembrane segment spans residues 244-264; sequence AVKWMYAIEACLSLTLLYPIA. Topologically, residues 265 to 276 are cytoplasmic; sequence RWSEKRFRLEHR. A helical transmembrane segment spans residues 277-297; the sequence is LMAGLLVMSLSMIPIGMVGNL. Residues 298 to 299 are Periplasmic-facing; the sequence is QQ. A helical membrane pass occupies residues 300–320; it reads LFTLICAFYIGSVIAEPARET. The Cytoplasmic segment spans residues 321 to 339; sequence LSASLADARARGSYMGFSR. The helical transmembrane segment at 340-360 threads the bilayer; sequence LGLAIGGAIGYIGGGWLFDMG. The Periplasmic portion of the chain corresponds to 361–367; sequence KALAQPE. A helical membrane pass occupies residues 368-388; that stretch reads LPWMMLGIIGFITFLALGWQF. Topologically, residues 389–402 are cytoplasmic; sequence SHKRTPRRMLEPGA.

It belongs to the major facilitator superfamily. DHA1 family. MdtH (TC 2.A.1.2.21) subfamily.

The protein localises to the cell inner membrane. In Salmonella schwarzengrund (strain CVM19633), this protein is Multidrug resistance protein MdtH.